We begin with the raw amino-acid sequence, 320 residues long: SUMO-activating enzyme subunit 1B-1 (320 aa).

Position 1 is an N-acetylmethionine (Met1).

It belongs to the ubiquitin-activating E1 family. In terms of assembly, heterodimer of SAE1A or SAE1B and SAE2. The complex binds SUMO proteins via SAE2.

Its subcellular location is the nucleus. Its pathway is protein modification; protein sumoylation. Its function is as follows. The dimeric enzyme acts as an E1 ligase for SUMO1 and SUMO2. It mediates ATP-dependent activation of SUMO proteins and formation of a thioester with a conserved cysteine residue on SAE2. Functionally redundant with its paralog SAE1A. The polypeptide is SUMO-activating enzyme subunit 1B-1 (SAE1B-1) (Arabidopsis thaliana (Mouse-ear cress)).